We begin with the raw amino-acid sequence, 198 residues long: Large ribosomal subunit protein bL12m (198 aa).

Residues 1-36 (MLPAAARPLWGPCLGLRAAAFRLARRQVPCVCAVRH) constitute a mitochondrion transit peptide. N6-acetyllysine is present on residues K125, K138, K142, and K144. Position 150 is an N6-acetyllysine; alternate (K150). K150 is modified (N6-succinyllysine; alternate). A Glycyl lysine isopeptide (Lys-Gly) (interchain with G-Cter in ubiquitin) cross-link involves residue K150. Residue K162 is modified to N6-succinyllysine. N6-acetyllysine is present on residues K163 and K173. An N6-acetyllysine; alternate modification is found at K178. Position 178 is an N6-succinyllysine; alternate (K178). N6-acetyllysine is present on K185.

This sequence belongs to the bacterial ribosomal protein bL12 family. Component of the mitochondrial large ribosomal subunit (mt-LSU). Mature mammalian 55S mitochondrial ribosomes consist of a small (28S) and a large (39S) subunit. The 28S small subunit contains a 12S ribosomal RNA (12S mt-rRNA) and 30 different proteins. The 39S large subunit contains a 16S rRNA (16S mt-rRNA), a copy of mitochondrial valine transfer RNA (mt-tRNA(Val)), which plays an integral structural role, and 52 different proteins. bL12m interacts with NOA1. Post-translationally, two mature forms are produced by differential two-step proteolytic cleavage. Cleaved by the mitochondrial processing protease to produce the long mature form and subsequently by the mitochondrial intermediate protease to produce the short mature form. In terms of processing, in the presence of CUL3, undergoes 'Lys-63'-linked ubiquitination at Lys-150 which results in proteasomal degradation.

It localises to the mitochondrion matrix. As a component of the mitochondrial large ribosomal subunit, plays a role in mitochondrial translation. When present in mitochondria as a free protein not associated with the ribosome, associates with mitochondrial RNA polymerase POLRMT to activate transcription. Required for POLRMT stability. The chain is Large ribosomal subunit protein bL12m (MRPL12) from Homo sapiens (Human).